A 631-amino-acid polypeptide reads, in one-letter code: Coiled-coil domain-containing protein 93 (631 aa).

Disordered regions lie at residues 1–23 (MGLPRGPEGQGLPEVETREDEEQ) and 214–243 (QSKMEKAEDKKTALPAGLSATEKADAHEED). The interval 1-430 (MGLPRGPEGQ…LKAERAPRGD (430 aa)) is sufficient for interaction with CCDC22. Residues 215–225 (SKMEKAEDKKT) show a composition bias toward basic and acidic residues. 3 positions are modified to phosphoserine: Ser-298, Ser-301, and Ser-305. A coiled-coil region spans residues 309–631 (LGTSQLHRRK…LLSKVKAKAS (323 aa)). Residues 421 to 433 (LKAERAPRGDEKT) show a composition bias toward basic and acidic residues. A disordered region spans residues 421 to 447 (LKAERAPRGDEKTLSSGEPPGTLTSAM). The segment at 448 to 631 (THDEDLDRRY…LLSKVKAKAS (184 aa)) is sufficient for interaction with WASHC2C.

This sequence belongs to the CCDC93 family. As to quaternary structure, component of the commander complex consisting of the CCC subcomplex and the retriever subcomplex. Component of the CCC (COMMD/CCDC22/CCDC93) subcomplex consisting of COMMD1, COMMD2, COMMD3, COMMD4, COMMD5, COMMD6, COMMD7, COMMD8, COMMD9, COMMD10, CCDC22 and CCDC93. Forms a coiled-coil heterodimer with CCDC22; this heterodimer interacts with the guanine nucleotide exchange factor DENND10; the interaction is direct. Interacts with WASHC1. Interacts directly with WASHC2C. Interacts with SNX17 and SNX31.

The protein resides in the early endosome. In terms of biological role, component of the commander complex that is essential for endosomal recycling of transmembrane cargos; the commander complex is composed of composed of the CCC subcomplex and the retriever subcomplex. Component of the CCC complex, which is involved in the regulation of endosomal recycling of surface proteins, including integrins, signaling receptor and channels. The CCC complex associates with SNX17, retriever and WASH complexes to prevent lysosomal degradation and promote cell surface recycling of numerous cargos such as integrins ITGA5:ITGB1. Involved in copper-dependent ATP7A trafficking between the trans-Golgi network and vesicles in the cell periphery; the function is proposed to depend on its association within the CCC complex and cooperation with the WASH complex on early endosomes and is dependent on its interaction with WASHC2C. Functionally, (Microbial infection) The CCC complex, in collaboration with the heterotrimeric retriever complex, mediates the exit of human papillomavirus to the cell surface. The sequence is that of Coiled-coil domain-containing protein 93 (CCDC93) from Homo sapiens (Human).